The primary structure comprises 324 residues: Beta-ketoacyl-[acyl-carrier-protein] synthase III (324 aa).

Catalysis depends on residues Cys-112 and His-250. Positions 251–255 (QANIR) are ACP-binding. The active site involves Asn-280.

The protein belongs to the thiolase-like superfamily. FabH family. In terms of assembly, homodimer.

Its subcellular location is the cytoplasm. The enzyme catalyses malonyl-[ACP] + acetyl-CoA + H(+) = 3-oxobutanoyl-[ACP] + CO2 + CoA. The protein operates within lipid metabolism; fatty acid biosynthesis. In terms of biological role, catalyzes the condensation reaction of fatty acid synthesis by the addition to an acyl acceptor of two carbons from malonyl-ACP. Catalyzes the first condensation reaction which initiates fatty acid synthesis and may therefore play a role in governing the total rate of fatty acid production. Possesses both acetoacetyl-ACP synthase and acetyl transacylase activities. Its substrate specificity determines the biosynthesis of branched-chain and/or straight-chain of fatty acids. The sequence is that of Beta-ketoacyl-[acyl-carrier-protein] synthase III from Clostridium novyi (strain NT).